Reading from the N-terminus, the 67-residue chain is Protein AaeX (67 aa).

A run of 2 helical transmembrane segments spans residues phenylalanine 10–valine 30 and phenylalanine 43–phenylalanine 63.

This sequence belongs to the AaeX family.

It is found in the cell membrane. The protein is Protein AaeX of Pectobacterium carotovorum subsp. carotovorum (strain PC1).